A 291-amino-acid chain; its full sequence is tRNA-cytidine(32) 2-sulfurtransferase (291 aa).

The PP-loop motif motif lies at 36-41 (SGGKDS). The [4Fe-4S] cluster site is built by Cys111, Cys114, and Cys202. Residues 259–291 (DPWLDAEDEEAEDCGEPSAGDGVVSLGGARGGR) are disordered. Positions 262–273 (LDAEDEEAEDCG) are enriched in acidic residues.

Belongs to the TtcA family. Homodimer. Mg(2+) serves as cofactor. [4Fe-4S] cluster is required as a cofactor.

Its subcellular location is the cytoplasm. It carries out the reaction cytidine(32) in tRNA + S-sulfanyl-L-cysteinyl-[cysteine desulfurase] + AH2 + ATP = 2-thiocytidine(32) in tRNA + L-cysteinyl-[cysteine desulfurase] + A + AMP + diphosphate + H(+). It functions in the pathway tRNA modification. In terms of biological role, catalyzes the ATP-dependent 2-thiolation of cytidine in position 32 of tRNA, to form 2-thiocytidine (s(2)C32). The sulfur atoms are provided by the cysteine/cysteine desulfurase (IscS) system. In Anaeromyxobacter sp. (strain K), this protein is tRNA-cytidine(32) 2-sulfurtransferase.